The sequence spans 790 residues: Nitrogen permease reactivator protein (790 aa).

The interval 1 to 68 (MSSLTRLLQE…DRNRANVPVP (68 aa)) is disordered. A compositionally biased stretch (polar residues) spans 16-38 (TSNSSPRTSADTLTTTPESQSLD). A compositionally biased stretch (low complexity) spans 46–58 (SSHIGSVSNSSSS). At S47 the chain carries Phosphoserine; by autocatalysis. S85, S90, S100, S111, S116, S125, S137, and S141 each carry phosphoserine. Polar residues predominate over residues 151–175 (RLSTTSHTSGRAIPSLSSSIPYSVP). 2 disordered regions span residues 151-188 (RLST…NSNS) and 234-258 (LQKA…SGSF). The segment covering 176–188 (NSNKDNNSSNSNS) has biased composition (low complexity). Over residues 238 to 248 (SMDSNNANATQ) the composition is skewed to polar residues. Residues 249–258 (SRSISRSGSF) show a composition bias toward low complexity. At S257 the chain carries Phosphoserine; by autocatalysis. A phosphoserine mark is found at S259, S260, S288, S292, S317, S320, and S328. The span at 276 to 289 (NSNSAGMSFSANSN) shows a compositional bias: low complexity. A disordered region spans residues 276 to 357 (NSNSAGMSFS…QSVPRSQHSS (82 aa)). Polar residues-rich tracts occupy residues 290 to 305 (GPSP…NGST), 314 to 339 (RQSS…SPSS), and 346 to 357 (PSQSVPRSQHSS). Y334 is modified (phosphotyrosine). 3 positions are modified to phosphoserine: S336, S353, and S356. S357 carries the post-translational modification Phosphoserine; by autocatalysis. S385 is subject to Phosphoserine. Positions 438–742 (IKTGADLGAG…IEEIMEDPWI (305 aa)) constitute a Protein kinase domain. ATP-binding positions include 444–452 (LGAGAGGSV) and K467. Residue D561 is the Proton acceptor of the active site. Disordered stretches follow at residues 666 to 704 (LVTR…NIGP) and 766 to 790 (HHTQ…QNNQ). The span at 677–688 (DESHSTEKKKPE) shows a compositional bias: basic and acidic residues. Over residues 689 to 701 (SSSNNVSDPNNVN) the composition is skewed to low complexity.

This sequence belongs to the protein kinase superfamily. Ser/Thr protein kinase family. As to quaternary structure, interacts with TIP41. Post-translationally, hyperphosphorylated in nitrogen-rich growth medium. Nitrogen limitation (or rapamycin treatment) leads to substantial, though not complete dephosphorylation. Autophosphorylation plays only a minor role and seems not to be regulated by the quality of the nitrogen source.

It localises to the cytoplasm. The enzyme catalyses L-seryl-[protein] + ATP = O-phospho-L-seryl-[protein] + ADP + H(+). It catalyses the reaction L-threonyl-[protein] + ATP = O-phospho-L-threonyl-[protein] + ADP + H(+). Dephosphorylation by SIT4 activates NPR1 kinase activity. Nutrient-regulated protein kinase that promotes the activity of at least 6 distinct transport systems for nitrogenous nutrients under conditions of nitrogen catabolite derepression. Under poor nitrogen growth conditions, required for post-Golgi sorting of the general amino acid permease GAP1 and the three known ammonia permeases, MEP1/2/3, to the plasma membrane. Also contributes to the stability and the retention of GAP1 at the plasma membrane. Inversely, promotes the degradation of tryptophan permease TAT2 under the same conditions. Activity is regulated by the TOR signaling pathway via phosphatase SIT4. Although thought to be involved in regulation of GLN3-dependent transcription by nitrogen catabolite repression, this seems to be an indirect effect from the reduced uptake of the nitrogen-repressing compound. The chain is Nitrogen permease reactivator protein (NPR1) from Saccharomyces cerevisiae (strain ATCC 204508 / S288c) (Baker's yeast).